Reading from the N-terminus, the 269-residue chain is Histidinol-phosphatase (269 aa).

It belongs to the PHP hydrolase family. HisK subfamily.

The enzyme catalyses L-histidinol phosphate + H2O = L-histidinol + phosphate. The protein operates within amino-acid biosynthesis; L-histidine biosynthesis; L-histidine from 5-phospho-alpha-D-ribose 1-diphosphate: step 8/9. The polypeptide is Histidinol-phosphatase (hisK) (Lactococcus lactis subsp. lactis (strain IL1403) (Streptococcus lactis)).